The sequence spans 251 residues: HTH-type transcriptional regulator UlaR (251 aa).

The 56-residue stretch at 3–58 folds into the HTH deoR-type domain; that stretch reads EAQRHQILLEMLAQLGFVTVEKVVERLGISPATARRDINKLDERGKLKKVRNGAEA. A DNA-binding region (H-T-H motif) is located at residues 20–39; that stretch reads VTVEKVVERLGISPATARRD.

The protein localises to the cytoplasm. In terms of biological role, represses ulaG and the ulaABCDEF operon. The polypeptide is HTH-type transcriptional regulator UlaR (Shigella sonnei (strain Ss046)).